A 178-amino-acid polypeptide reads, in one-letter code: Large ribosomal subunit protein uL5 (178 aa).

The protein belongs to the universal ribosomal protein uL5 family. As to quaternary structure, part of the 50S ribosomal subunit; part of the 5S rRNA/L5/L18/L25 subcomplex. Contacts the 5S rRNA and the P site tRNA. Forms a bridge to the 30S subunit in the 70S ribosome.

Its function is as follows. This is one of the proteins that bind and probably mediate the attachment of the 5S RNA into the large ribosomal subunit, where it forms part of the central protuberance. In the 70S ribosome it contacts protein S13 of the 30S subunit (bridge B1b), connecting the 2 subunits; this bridge is implicated in subunit movement. Contacts the P site tRNA; the 5S rRNA and some of its associated proteins might help stabilize positioning of ribosome-bound tRNAs. The polypeptide is Large ribosomal subunit protein uL5 (Psychrobacter sp. (strain PRwf-1)).